Consider the following 396-residue polypeptide: MSFDLRTRLDARRTAHLYRQRPLLQSPQGPHVIVDGQPLLAFCNNDYMGLANHPEVIAAWQAGAERWGVGGGASHLVIGHSTPHHELEEALAELTGRPRALLFSNGYMANLGAVTALVGQGDTVLEDRLNHASLLDAGLLSGARFSRYLHNDAGSLNARLEKAVGDTLVVTDGVFSMDGDIADLPALAQAAKAKGAWLMVDDAHGFGPLGANGAGIVEHFGLSMEDVPVLVGTLGKSFGTSGAFVAGSEELIETLIQFARPYIYTTSQPPALACATLKSLQLLRSEHWRREHLASLIGQFRRGAEQLGLQLMDSFTPIQPIMIGDAGRALRLSQLLRERGLLVTAIRPPTVPAGSARLRVTLSAAHSEADVQLLLEALEQCYPLLDASESTEPVHA.

R19 provides a ligand contact to substrate. 106–107 (GY) provides a ligand contact to pyridoxal 5'-phosphate. H131 serves as a coordination point for substrate. Pyridoxal 5'-phosphate is bound by residues S176, H204, and T233. K236 bears the N6-(pyridoxal phosphate)lysine mark. T350 provides a ligand contact to substrate.

The protein belongs to the class-II pyridoxal-phosphate-dependent aminotransferase family. BioF subfamily. Homodimer. It depends on pyridoxal 5'-phosphate as a cofactor.

It catalyses the reaction 6-carboxyhexanoyl-[ACP] + L-alanine + H(+) = (8S)-8-amino-7-oxononanoate + holo-[ACP] + CO2. Its pathway is cofactor biosynthesis; biotin biosynthesis. In terms of biological role, catalyzes the decarboxylative condensation of pimeloyl-[acyl-carrier protein] and L-alanine to produce 8-amino-7-oxononanoate (AON), [acyl-carrier protein], and carbon dioxide. The chain is 8-amino-7-oxononanoate synthase from Pseudomonas syringae pv. tomato (strain ATCC BAA-871 / DC3000).